We begin with the raw amino-acid sequence, 93 residues long: Consomatin G1 (93 aa).

An N-terminal signal peptide occupies residues 1 to 22 (MQTAYWVMLMMMVCITAPLPEG). A propeptide spanning residues 23 to 69 (GKPNSGIRGLVPNDLTPQHTLRSLISRRQTDVLLDATLLTTPAPEQR) is cleaved from the precursor. Cys-72 and Cys-77 form a disulfide bridge. Residue Trp-74 is modified to D-tryptophan. A propeptide spanning residues 79-93 (PRPYPWRRRDLNGKR) is cleaved from the precursor.

This sequence belongs to the conotoxin C superfamily. Consomatin family. As to expression, expressed by the venom duct.

The protein localises to the secreted. In terms of biological role, potently activates human somatostatin receptors (SSTR) with a specific activation of SSTR2 (EC(50)=2.6 nM). This Conus geographus (Geography cone) protein is Consomatin G1.